The primary structure comprises 199 residues: Chaperone protein TorD (199 aa).

Belongs to the TorD/DmsD family. TorD subfamily.

It is found in the cytoplasm. In terms of biological role, involved in the biogenesis of TorA. Acts on TorA before the insertion of the molybdenum cofactor and, as a result, probably favors a conformation of the apoenzyme that is competent for acquiring the cofactor. This is Chaperone protein TorD from Escherichia coli O127:H6 (strain E2348/69 / EPEC).